A 147-amino-acid chain; its full sequence is Protein PBDC1 homolog (147 aa).

It belongs to the PBDC1 family.

Its subcellular location is the cytoplasm. The protein localises to the nucleus. The chain is Protein PBDC1 homolog from Schizosaccharomyces pombe (strain 972 / ATCC 24843) (Fission yeast).